Here is a 172-residue protein sequence, read N- to C-terminus: NAD(P)H-quinone oxidoreductase subunit J (172 aa).

The protein belongs to the complex I 30 kDa subunit family. NDH-1 can be composed of about 15 different subunits; different subcomplexes with different compositions have been identified which probably have different functions.

Its subcellular location is the cellular thylakoid membrane. It carries out the reaction a plastoquinone + NADH + (n+1) H(+)(in) = a plastoquinol + NAD(+) + n H(+)(out). It catalyses the reaction a plastoquinone + NADPH + (n+1) H(+)(in) = a plastoquinol + NADP(+) + n H(+)(out). Functionally, NDH-1 shuttles electrons from an unknown electron donor, via FMN and iron-sulfur (Fe-S) centers, to quinones in the respiratory and/or the photosynthetic chain. The immediate electron acceptor for the enzyme in this species is believed to be plastoquinone. Couples the redox reaction to proton translocation, and thus conserves the redox energy in a proton gradient. Cyanobacterial NDH-1 also plays a role in inorganic carbon-concentration. The chain is NAD(P)H-quinone oxidoreductase subunit J from Synechococcus elongatus (strain ATCC 33912 / PCC 7942 / FACHB-805) (Anacystis nidulans R2).